The sequence spans 657 residues: Zinc finger protein 630 (657 aa).

In terms of domain architecture, KRAB spans 8 to 79 (VTFEDVAVDF…ESELSRWIYP (72 aa)). 2 C2H2-type zinc fingers span residues 263 to 285 (NVCSMCGKAFIKKSQLIIHQRIH) and 291 to 313 (YVCGDCRKAFSEKSHLIVHQRIH). A C2H2-type 3; degenerate zinc finger spans residues 319-341 (YECTKYGRAFSRKSPFTVHQRVH). 9 consecutive C2H2-type zinc fingers follow at residues 347–369 (YECFECPKAFSQKSHLIIHQRVH), 375–397 (FECSECRKAFCEMSHLFIHQITH), 403–425 (YECTECGKTFPRKTQLIIHQRTH), 431–453 (YKCGECGKTFCQQSHLIGHQRIH), 459–481 (YVCTDCGKAFSQKSHLTGHQRLH), 487–509 (YMCTECGKSFSQKSPLIIHQRIH), 515–537 (YQCGECGKTFSQKSLLIIHLRVH), 543–565 (YECTECGRAFSLKSHLILHQRGH), and 571–593 (YECSECGKAFCGKSPLIIHQKTH). The segment at 599-621 (PECAESGMTFFWKSQMITYQRRH) adopts a C2H2-type 13; degenerate zinc-finger fold. The C2H2-type 14; degenerate zinc finger occupies 627–649 (SRCSDCGKAFCQHVYFTGHQNPY).

The protein belongs to the krueppel C2H2-type zinc-finger protein family.

Its subcellular location is the nucleus. Its function is as follows. May be involved in transcriptional regulation. The sequence is that of Zinc finger protein 630 (ZNF630) from Homo sapiens (Human).